Consider the following 213-residue polypeptide: High frequency lysogenization protein HflD (213 aa).

The stretch at 79–126 forms a coiled coil; that stretch reads QGLNAELTRYTLSLMVLERKLSSAKGALDTLGNRINGLQRQLEHFDLQ.

The protein belongs to the HflD family. In terms of assembly, interacts with CII protein from phage lambda.

Its subcellular location is the cytoplasm. It is found in the cell inner membrane. Its function is as follows. Negative regulator of phage lambda lysogenization. Contributes to the degradation of the phage regulatory protein CII. Acts probably by holding CII on the membrane surface, away from the target promoters, but close to the FtsH protease. The polypeptide is High frequency lysogenization protein HflD (Escherichia coli O127:H6 (strain E2348/69 / EPEC)).